Consider the following 161-residue polypeptide: Globin CTT-VIIB-3 (161 aa).

The N-terminal stretch at 1-16 is a signal peptide; sequence MKFFAVLALCIVGAIA. The Globin domain occupies 18–161; sequence PLTADEASLV…NTYAIVVPRL (144 aa). Heme b contacts are provided by His-76 and His-111.

This sequence belongs to the globin family. In terms of assembly, homodimer.

In Chironomus thummi thummi (Midge), this protein is Globin CTT-VIIB-3 (CTT-7B3).